Consider the following 149-residue polypeptide: Large ribosomal subunit protein uL24 (149 aa).

The interval 114–149 (RKIIERSGGTPEVEAVPEKSEEEKEEKEKEEEKSEE) is disordered. The span at 129–149 (VPEKSEEEKEEKEKEEEKSEE) shows a compositional bias: basic and acidic residues.

It belongs to the universal ribosomal protein uL24 family. As to quaternary structure, part of the 50S ribosomal subunit.

Its function is as follows. One of two assembly initiator proteins, it binds directly to the 5'-end of the 23S rRNA, where it nucleates assembly of the 50S subunit. In terms of biological role, located at the polypeptide exit tunnel on the outside of the subunit. The chain is Large ribosomal subunit protein uL24 from Methanopyrus kandleri (strain AV19 / DSM 6324 / JCM 9639 / NBRC 100938).